We begin with the raw amino-acid sequence, 933 residues long: Myocardin (933 aa).

Residues 12–27 carry the MEF2C-binding motif; the sequence is IRSKFRSVLQLRLQQR. 3 RPEL repeats span residues 18 to 43, 62 to 87, and 106 to 131; these read SVLQLRLQQRRTQEQLANEGIIPPLR, DTLKHKVRNRSDRGNVVKMHILQASS, and DDLNEKIALRPGPLELVEKNILPVDC. The interval 153-205 is HDAC5-binding; that stretch reads FEEDSSSDGLSPDQTRSEDLPGSAGSPLDTKAAETPLAGPRGTVQDLTLGSEN. Disordered regions lie at residues 154 to 282 and 324 to 365; these read EEDS…PPPM and NEQM…GPLP. The span at 210–220 shows a compositional bias: polar residues; it reads SAPQSGNQSDL. Residues 248–265 show a composition bias toward basic residues; that stretch reads NRHKKPKDPKPKVKKLKY. Residues 330 to 346 are compositionally biased toward low complexity; it reads NPNSSSAPLSSTPLSPA. Positions 347 to 357 are enriched in polar residues; that stretch reads KNSFSGQTGVS. Positions 368–402 constitute an SAP domain; that stretch reads LDDLKVSELRQQLRIRGLPVSGTKTALMDRLRPFQ. A phosphoserine; by GSK3-beta mark is found at Ser-445, Ser-449, Ser-453, and Ser-457. The stretch at 515-550 forms a coiled coil; the sequence is LVEKQKVINELTWKLQQEQRQVEELRMQLQKQKRGT. The tract at residues 568-613 is disordered; sequence DAGSSCPFAPLPRAVKRQSNSSEEQPAAGDAARLRPLGNTHCAESS. 4 positions are modified to phosphoserine; by GSK3-beta: Ser-621, Ser-625, Ser-629, and Ser-633. Disordered regions lie at residues 630–672 and 760–794; these read PQHS…VSSP and PKIPGSSRSPTAALPKPSATFDQASSGGQLAFDHY. The interval 712-933 is required for interaction with and ubiquitination by STUB1; that stretch reads ITQPPSYEDA…SPMDLHLQQW (222 aa). Phosphoserine; by MAPK1 and MAPK3 occurs at positions 810, 857, and 864. Phosphothreonine; by MAPK1 and MAPK3 is present on Thr-891.

In terms of assembly, homodimer. Interacts with MLLT7/FOXO4. Interacts with SRF, its association does not depend on specific DNA sequences for ternary complex formation. Interacts (via C-terminal) with EP300 (via the CREB-binding domain). Interacts with HDAC4 and HDAC5. Interacts with MEF2C. Interacts (via C-terminus) with STUB1/CHIP. Interacts with PURB. Post-translationally, ubiquitinated; by STUB1/CHIP at the C-terminus, leading to its degradation by the proteasome. Phosphorylation by GSK3B is required for STUB1/CHIP-mediated ubiquitination. In terms of processing, phosphorylation negatively regulates the intrinsic myocardin transcriptional activity. Phosphorylated; by GSK3B. In terms of tissue distribution, expressed in the heart and in smooth muscle cells-containing tissues (aorta, pulmonary vein, lung), but is not detectable in skeletal muscle, liver, kidney and spleen.

It localises to the nucleus. Functionally, smooth muscle cells (SM) and cardiac muscle cells-specific transcriptional factor which uses the canonical single or multiple CArG boxes DNA sequence. Acts as a cofactor of serum response factor (SRF) with the potential to modulate SRF-target genes. Plays a crucial role in cardiogenesis, urinary bladder development, and differentiation of the smooth muscle cell lineage (myogenesis). Positively regulates the transcription of genes involved in vascular smooth muscle contraction. The polypeptide is Myocardin (MYOCD) (Sus scrofa (Pig)).